Consider the following 322-residue polypeptide: tRNA-dihydrouridine synthase B (322 aa).

FMN-binding positions include 16 to 18 (PMA) and glutamine 70. The Proton donor role is filled by cysteine 100. FMN is bound by residues lysine 139, 200-202 (NGD), and 224-225 (GR).

This sequence belongs to the Dus family. DusB subfamily. Requires FMN as cofactor.

It carries out the reaction a 5,6-dihydrouridine in tRNA + NAD(+) = a uridine in tRNA + NADH + H(+). It catalyses the reaction a 5,6-dihydrouridine in tRNA + NADP(+) = a uridine in tRNA + NADPH + H(+). Catalyzes the synthesis of 5,6-dihydrouridine (D), a modified base found in the D-loop of most tRNAs, via the reduction of the C5-C6 double bond in target uridines. This chain is tRNA-dihydrouridine synthase B, found in Vibrio vulnificus (strain CMCP6).